Consider the following 222-residue polypeptide: Probable transaldolase (222 aa).

Lys-91 (schiff-base intermediate with substrate) is an active-site residue.

It belongs to the transaldolase family. Type 3B subfamily.

The protein localises to the cytoplasm. It carries out the reaction D-sedoheptulose 7-phosphate + D-glyceraldehyde 3-phosphate = D-erythrose 4-phosphate + beta-D-fructose 6-phosphate. Its pathway is carbohydrate degradation; pentose phosphate pathway; D-glyceraldehyde 3-phosphate and beta-D-fructose 6-phosphate from D-ribose 5-phosphate and D-xylulose 5-phosphate (non-oxidative stage): step 2/3. Its function is as follows. Transaldolase is important for the balance of metabolites in the pentose-phosphate pathway. In Chlorobium phaeovibrioides (strain DSM 265 / 1930) (Prosthecochloris vibrioformis (strain DSM 265)), this protein is Probable transaldolase.